A 331-amino-acid chain; its full sequence is Ketol-acid reductoisomerase (NADP(+)) (331 aa).

Positions 2–181 (LEKYYDKDAD…GATRAVVFET (180 aa)) constitute a KARI N-terminal Rossmann domain. Residues 25-28 (YGSQ), Arg48, Ser52, and 82-85 (DEQQ) each bind NADP(+). His107 is a catalytic residue. An NADP(+)-binding site is contributed by Gly133. Residues 182–327 (SFREETETDL…KEIRATMPQF (146 aa)) enclose the KARI C-terminal knotted domain. Mg(2+) contacts are provided by Asp190, Glu194, Glu226, and Glu230. Ser251 lines the substrate pocket.

This sequence belongs to the ketol-acid reductoisomerase family. It depends on Mg(2+) as a cofactor.

It carries out the reaction (2R)-2,3-dihydroxy-3-methylbutanoate + NADP(+) = (2S)-2-acetolactate + NADPH + H(+). It catalyses the reaction (2R,3R)-2,3-dihydroxy-3-methylpentanoate + NADP(+) = (S)-2-ethyl-2-hydroxy-3-oxobutanoate + NADPH + H(+). It functions in the pathway amino-acid biosynthesis; L-isoleucine biosynthesis; L-isoleucine from 2-oxobutanoate: step 2/4. It participates in amino-acid biosynthesis; L-valine biosynthesis; L-valine from pyruvate: step 2/4. Its function is as follows. Involved in the biosynthesis of branched-chain amino acids (BCAA). Catalyzes an alkyl-migration followed by a ketol-acid reduction of (S)-2-acetolactate (S2AL) to yield (R)-2,3-dihydroxy-isovalerate. In the isomerase reaction, S2AL is rearranged via a Mg-dependent methyl migration to produce 3-hydroxy-3-methyl-2-ketobutyrate (HMKB). In the reductase reaction, this 2-ketoacid undergoes a metal-dependent reduction by NADPH to yield (R)-2,3-dihydroxy-isovalerate. In Methanospirillum hungatei JF-1 (strain ATCC 27890 / DSM 864 / NBRC 100397 / JF-1), this protein is Ketol-acid reductoisomerase (NADP(+)).